A 164-amino-acid polypeptide reads, in one-letter code: Succinate dehydrogenase assembly factor 3, mitochondrial (164 aa).

Residues 1–51 (MRPTLLRLANASGPLPLSVSQASVQLIPPIPLYRRLLRAHRLLPVDMRYMG) constitute a mitochondrion transit peptide. Basic and acidic residues predominate over residues 136-145 (KSPEQIEREA). A disordered region spans residues 136-164 (KSPEQIEREANSAGVSPVNPNDPTTAGNS). The segment covering 153-164 (VNPNDPTTAGNS) has biased composition (polar residues).

It belongs to the complex I LYR family. SDHAF3 subfamily. As to quaternary structure, interacts with the iron-sulfur protein subunit within the SDH catalytic dimer.

It is found in the mitochondrion matrix. In terms of biological role, plays an essential role in the assembly of succinate dehydrogenase (SDH), an enzyme complex (also referred to as respiratory complex II) that is a component of both the tricarboxylic acid (TCA) cycle and the mitochondrial electron transport chain, and which couples the oxidation of succinate to fumarate with the reduction of ubiquinone (coenzyme Q) to ubiquinol. Promotes maturation of the iron-sulfur protein subunit of the SDH catalytic dimer, protecting it from the deleterious effects of oxidants. May act together with SDHAF1. This Cryptococcus neoformans var. neoformans serotype D (strain B-3501A) (Filobasidiella neoformans) protein is Succinate dehydrogenase assembly factor 3, mitochondrial.